The following is a 299-amino-acid chain: ATP phosphoribosyltransferase (299 aa).

This sequence belongs to the ATP phosphoribosyltransferase family. Long subfamily. As to quaternary structure, equilibrium between an active dimeric form, an inactive hexameric form and higher aggregates. Interconversion between the various forms is largely reversible and is influenced by the natural substrates and inhibitors of the enzyme. It depends on Mg(2+) as a cofactor.

It is found in the cytoplasm. It carries out the reaction 1-(5-phospho-beta-D-ribosyl)-ATP + diphosphate = 5-phospho-alpha-D-ribose 1-diphosphate + ATP. It functions in the pathway amino-acid biosynthesis; L-histidine biosynthesis; L-histidine from 5-phospho-alpha-D-ribose 1-diphosphate: step 1/9. Its activity is regulated as follows. Feedback inhibited by histidine. Its function is as follows. Catalyzes the condensation of ATP and 5-phosphoribose 1-diphosphate to form N'-(5'-phosphoribosyl)-ATP (PR-ATP). Has a crucial role in the pathway because the rate of histidine biosynthesis seems to be controlled primarily by regulation of HisG enzymatic activity. In Buchnera aphidicola subsp. Schizaphis graminum (strain Sg), this protein is ATP phosphoribosyltransferase (hisG).